The primary structure comprises 139 residues: Small ribosomal subunit protein uS11A (139 aa).

Residues 119 to 139 (DVTPIPTDSTRRKGGRRGRRL) are disordered. Positions 130–139 (RKGGRRGRRL) are enriched in basic residues.

It belongs to the universal ribosomal protein uS11 family. Component of the small ribosomal subunit (SSU). Mature yeast ribosomes consist of a small (40S) and a large (60S) subunit. The 40S small subunit contains 1 molecule of ribosomal RNA (18S rRNA) and at least 33 different proteins. The large 60S subunit contains 3 rRNA molecules (25S, 5.8S and 5S rRNA) and at least 46 different proteins. uS11 interacts with eS1 forming part of the mRNA exit tunnel. uS11 interacts with snoRNA U3. uS11 interacts with MPP10. Component of the ribosomal small subunit (SSU) processome composed of at least 40 protein subunits and snoRNA U3.

It localises to the cytoplasm. It is found in the nucleus. The protein resides in the nucleolus. Functionally, component of the ribosome, a large ribonucleoprotein complex responsible for the synthesis of proteins in the cell. The small ribosomal subunit (SSU) binds messenger RNAs (mRNAs) and translates the encoded message by selecting cognate aminoacyl-transfer RNA (tRNA) molecules. The large subunit (LSU) contains the ribosomal catalytic site termed the peptidyl transferase center (PTC), which catalyzes the formation of peptide bonds, thereby polymerizing the amino acids delivered by tRNAs into a polypeptide chain. The nascent polypeptides leave the ribosome through a tunnel in the LSU and interact with protein factors that function in enzymatic processing, targeting, and the membrane insertion of nascent chains at the exit of the ribosomal tunnel. uS11 is involved in nucleolar processing of pre-18S ribosomal RNA and ribosome assembly. This is Small ribosomal subunit protein uS11A (rps1401) from Schizosaccharomyces pombe (strain 972 / ATCC 24843) (Fission yeast).